The following is a 600-amino-acid chain: Aspartate--tRNA(Asp/Asn) ligase (600 aa).

Glutamate 174 lines the L-aspartate pocket. Positions 198-201 (QLFK) are aspartate. Arginine 220 is an L-aspartate binding site. Residues 220–222 (RDE) and glutamine 229 each bind ATP. L-aspartate is bound at residue histidine 457. Glutamate 491 contacts ATP. Arginine 498 contributes to the L-aspartate binding site. An ATP-binding site is contributed by 543–546 (GLDR).

The protein belongs to the class-II aminoacyl-tRNA synthetase family. Type 1 subfamily. Homodimer.

The protein localises to the cytoplasm. It carries out the reaction tRNA(Asx) + L-aspartate + ATP = L-aspartyl-tRNA(Asx) + AMP + diphosphate. Aspartyl-tRNA synthetase with relaxed tRNA specificity since it is able to aspartylate not only its cognate tRNA(Asp) but also tRNA(Asn). Reaction proceeds in two steps: L-aspartate is first activated by ATP to form Asp-AMP and then transferred to the acceptor end of tRNA(Asp/Asn). The protein is Aspartate--tRNA(Asp/Asn) ligase of Burkholderia orbicola (strain MC0-3).